A 468-amino-acid polypeptide reads, in one-letter code: Aldehyde dehydrogenase family 3 member B1 (468 aa).

The residue at position 1 (M1) is an N-acetylmethionine. An NAD(+)-binding site is contributed by 188–193 (GSPRVG). Active-site residues include E210 and C244. C463 is lipidated: S-palmitoyl cysteine. C465 is modified (cysteine methyl ester). C465 carries S-geranylgeranyl cysteine lipidation. A propeptide spans 466-468 (TLL) (removed in mature form).

Belongs to the aldehyde dehydrogenase family. Dually lipidated in the C-terminus; prenylation occurs prior to, and is a prerequisite for palmitoylation. It is also required for activity towards long-chain substrates. As to expression, highest expression in kidney and lung.

Its subcellular location is the cell membrane. The enzyme catalyses an aldehyde + NADP(+) + H2O = a carboxylate + NADPH + 2 H(+). The catalysed reaction is an aldehyde + NAD(+) + H2O = a carboxylate + NADH + 2 H(+). It catalyses the reaction a long-chain fatty aldehyde + NAD(+) + H2O = a long-chain fatty acid + NADH + 2 H(+). It carries out the reaction a medium-chain fatty aldehyde + NAD(+) + H2O = a medium-chain fatty acid + NADH + 2 H(+). The enzyme catalyses octanal + NAD(+) + H2O = octanoate + NADH + 2 H(+). The catalysed reaction is nonanal + NAD(+) + H2O = nonanoate + NADH + 2 H(+). It catalyses the reaction hexadecanoate + NADH + 2 H(+) = hexadecanal + NAD(+) + H2O. It carries out the reaction (2E)-octenal + NAD(+) + H2O = (2E)-octenoate + NADH + 2 H(+). The enzyme catalyses (E)-non-2-enal + NAD(+) + H2O = (E)-non-2-enoate + NADH + 2 H(+). The catalysed reaction is (E)-4-hydroxynon-2-enal + NAD(+) + H2O = (E)-4-hydroxynon-2-enoate + NADH + 2 H(+). It catalyses the reaction (2E)-hexadecenal + NAD(+) + H2O = (E)-hexadec-2-enoate + NADH + 2 H(+). It carries out the reaction benzaldehyde + NAD(+) + H2O = benzoate + NADH + 2 H(+). The enzyme catalyses a medium-chain fatty aldehyde + NADP(+) + H2O = a medium-chain fatty acid + NADPH + 2 H(+). The catalysed reaction is hexanal + NADP(+) + H2O = hexanoate + NADPH + 2 H(+). It catalyses the reaction octanal + NADP(+) + H2O = octanoate + NADPH + 2 H(+). It carries out the reaction nonanal + NADP(+) + H2O = nonanoate + NADPH + 2 H(+). The enzyme catalyses (2E)-octenal + NADP(+) + H2O = (2E)-octenoate + NADPH + 2 H(+). The catalysed reaction is (E)-non-2-enal + NADP(+) + H2O = (E)-non-2-enoate + NADPH + 2 H(+). It catalyses the reaction (E)-4-hydroxynon-2-enal + NADP(+) + H2O = (E)-4-hydroxynon-2-enoate + NADPH + 2 H(+). It carries out the reaction benzaldehyde + NADP(+) + H2O = benzoate + NADPH + 2 H(+). It participates in alcohol metabolism; ethanol degradation; acetate from ethanol: step 2/2. Its function is as follows. Oxidizes medium and long chain saturated and unsaturated fatty aldehydes generated in the plasma membrane into non-toxic fatty acids. May have a protective role against the cytotoxicity induced by lipid peroxidation. Short-chain fatty aldehydes are not good substrates. Can use both NADP(+) and NAD(+) as electron acceptor in vitro, however in vivo preference will depend on their tissue levels. Low activity towards acetaldehyde and 3,4-dihydroxyphenylacetaldehyde. Able to metabolize aromatic aldehydes such as benzaldehyde to their acid form. This Homo sapiens (Human) protein is Aldehyde dehydrogenase family 3 member B1 (ALDH3B1).